We begin with the raw amino-acid sequence, 411 residues long: Secretion apparatus protein BsaZ (411 aa).

The next 4 helical transmembrane spans lie at 28-48 (IVALIVIATGALAAPALVDLT), 80-100 (IAAPFVLLCAAAGALPSLVQS), 137-157 (ALLYVGVFALTVRVFADLYHA), and 175-195 (IVLTVRLVLLFLLCALPVLIL). The disordered stretch occupies residues 341-411 (AANRGGPPPE…APARTGDQNA (71 aa)). Positions 370–404 (DACADNAFPDDAPPGAAAPNAGSPDSPAPDGGAPA) are enriched in low complexity.

This sequence belongs to the type III secretion exporter family.

It is found in the cell membrane. Its function is as follows. Part of the bsa type III secretion system, is involved in the intracellular replication of invading bacteria inside the host cell. Probably necessary for the lysis of the vacuole membrane and escape into the host cell cytoplasm. This Burkholderia mallei (strain NCTC 10247) protein is Secretion apparatus protein BsaZ (bsaZ).